A 115-amino-acid polypeptide reads, in one-letter code: Peptidyl-tRNA hydrolase (115 aa).

Belongs to the PTH2 family.

It localises to the cytoplasm. It carries out the reaction an N-acyl-L-alpha-aminoacyl-tRNA + H2O = an N-acyl-L-amino acid + a tRNA + H(+). Its function is as follows. The natural substrate for this enzyme may be peptidyl-tRNAs which drop off the ribosome during protein synthesis. In Methanococcoides burtonii (strain DSM 6242 / NBRC 107633 / OCM 468 / ACE-M), this protein is Peptidyl-tRNA hydrolase.